The primary structure comprises 358 residues: Alanine racemase (358 aa).

The active-site Proton acceptor; specific for D-alanine is K35. At K35 the chain carries N6-(pyridoxal phosphate)lysine. R130 is a substrate binding site. The active-site Proton acceptor; specific for L-alanine is the Y255. M303 is a binding site for substrate.

The protein belongs to the alanine racemase family. The cofactor is pyridoxal 5'-phosphate.

It catalyses the reaction L-alanine = D-alanine. The protein operates within amino-acid biosynthesis; D-alanine biosynthesis; D-alanine from L-alanine: step 1/1. Functionally, catalyzes the interconversion of L-alanine and D-alanine. May also act on other amino acids. This Shewanella baltica (strain OS155 / ATCC BAA-1091) protein is Alanine racemase (alr).